Here is a 400-residue protein sequence, read N- to C-terminus: Bifunctional enzyme IspD/IspF (400 aa).

The tract at residues 1–235 (MSLWTVLLAA…LAEAAAPPVP (235 aa)) is 2-C-methyl-D-erythritol 4-phosphate cytidylyltransferase. Positions 236–400 (VTGYGYDVHR…VALVSGWRRP (165 aa)) are 2-C-methyl-D-erythritol 2,4-cyclodiphosphate synthase. The a divalent metal cation site is built by aspartate 242 and histidine 244. 4-CDP-2-C-methyl-D-erythritol 2-phosphate is bound by residues 242-244 (DVH) and 276-277 (HS). Histidine 284 is an a divalent metal cation binding site. 4-CDP-2-C-methyl-D-erythritol 2-phosphate is bound by residues 298 to 300 (DIG), 303 to 307 (FPDSN), 374 to 377 (TTEE), and phenylalanine 381.

It in the N-terminal section; belongs to the IspD/TarI cytidylyltransferase family. IspD subfamily. This sequence in the C-terminal section; belongs to the IspF family. A divalent metal cation is required as a cofactor.

The catalysed reaction is 2-C-methyl-D-erythritol 4-phosphate + CTP + H(+) = 4-CDP-2-C-methyl-D-erythritol + diphosphate. It catalyses the reaction 4-CDP-2-C-methyl-D-erythritol 2-phosphate = 2-C-methyl-D-erythritol 2,4-cyclic diphosphate + CMP. It participates in isoprenoid biosynthesis; isopentenyl diphosphate biosynthesis via DXP pathway; isopentenyl diphosphate from 1-deoxy-D-xylulose 5-phosphate: step 2/6. It functions in the pathway isoprenoid biosynthesis; isopentenyl diphosphate biosynthesis via DXP pathway; isopentenyl diphosphate from 1-deoxy-D-xylulose 5-phosphate: step 4/6. Bifunctional enzyme that catalyzes the formation of 4-diphosphocytidyl-2-C-methyl-D-erythritol from CTP and 2-C-methyl-D-erythritol 4-phosphate (MEP) (IspD), and catalyzes the conversion of 4-diphosphocytidyl-2-C-methyl-D-erythritol 2-phosphate (CDP-ME2P) to 2-C-methyl-D-erythritol 2,4-cyclodiphosphate (ME-CPP) with a corresponding release of cytidine 5-monophosphate (CMP) (IspF). The sequence is that of Bifunctional enzyme IspD/IspF from Solidesulfovibrio magneticus (strain ATCC 700980 / DSM 13731 / RS-1) (Desulfovibrio magneticus).